The chain runs to 294 residues: Bifunctional protein FolD (294 aa).

NADP(+) is bound by residues 166–168 (GRS), Ser-191, and Ile-232.

The protein belongs to the tetrahydrofolate dehydrogenase/cyclohydrolase family. Homodimer.

The catalysed reaction is (6R)-5,10-methylene-5,6,7,8-tetrahydrofolate + NADP(+) = (6R)-5,10-methenyltetrahydrofolate + NADPH. It catalyses the reaction (6R)-5,10-methenyltetrahydrofolate + H2O = (6R)-10-formyltetrahydrofolate + H(+). It participates in one-carbon metabolism; tetrahydrofolate interconversion. Catalyzes the oxidation of 5,10-methylenetetrahydrofolate to 5,10-methenyltetrahydrofolate and then the hydrolysis of 5,10-methenyltetrahydrofolate to 10-formyltetrahydrofolate. This is Bifunctional protein FolD from Bradyrhizobium sp. (strain BTAi1 / ATCC BAA-1182).